Reading from the N-terminus, the 595-residue chain is ATP-dependent lipid A-core flippase (595 aa).

The interval 1-20 (MSQAYQPDSTKTSAKKSSAV) is disordered. A compositionally biased stretch (low complexity) spans 9–19 (STKTSAKKSSA). Transmembrane regions (helical) follow at residues 41 to 61 (WWAI…EIWI), 81 to 101 (GLFP…SFLG), 169 to 189 (VIAL…ILFV), and 266 to 286 (INTP…VWLA). The 282-residue stretch at 45–326 (LLTITGFAIN…LTDVNQQLQR (282 aa)) folds into the ABC transmembrane type-1 domain. One can recognise an ABC transporter domain in the interval 357-592 (IKLDNISLVY…HGHYAQMYAR (236 aa)). 390 to 397 (GRSGAGKS) contacts ATP.

It belongs to the ABC transporter superfamily. Lipid exporter (TC 3.A.1.106) family. Homodimer.

The protein resides in the cell inner membrane. It carries out the reaction ATP + H2O + lipid A-core oligosaccharideSide 1 = ADP + phosphate + lipid A-core oligosaccharideSide 2.. Functionally, involved in lipopolysaccharide (LPS) biosynthesis. Translocates lipid A-core from the inner to the outer leaflet of the inner membrane. Transmembrane domains (TMD) form a pore in the inner membrane and the ATP-binding domain (NBD) is responsible for energy generation. The chain is ATP-dependent lipid A-core flippase from Psychrobacter arcticus (strain DSM 17307 / VKM B-2377 / 273-4).